The primary structure comprises 179 residues: Large ribosomal subunit protein uL5 (179 aa).

Belongs to the universal ribosomal protein uL5 family. As to quaternary structure, part of the 50S ribosomal subunit; part of the 5S rRNA/L5/L18/L25 subcomplex. Contacts the 5S rRNA and the P site tRNA. Forms a bridge to the 30S subunit in the 70S ribosome.

This is one of the proteins that bind and probably mediate the attachment of the 5S RNA into the large ribosomal subunit, where it forms part of the central protuberance. In the 70S ribosome it contacts protein S13 of the 30S subunit (bridge B1b), connecting the 2 subunits; this bridge is implicated in subunit movement. Contacts the P site tRNA; the 5S rRNA and some of its associated proteins might help stabilize positioning of ribosome-bound tRNAs. The polypeptide is Large ribosomal subunit protein uL5 (Cellvibrio japonicus (strain Ueda107) (Pseudomonas fluorescens subsp. cellulosa)).